The following is a 256-amino-acid chain: MSDVARILKEARDQGRLTALDFAKEIFDDFIELHGDRNFRDDGAVIGGIGRLNGQAVTVVGIQKGKNLQDNLNRNFGQPHPEGYRKALRLMKQAEKFGRPVVTFINTAGAYPGVGAEERGQGEAIARNLMEMSDLKVPIIAIIIGEGGSGGALALAVADKVWMLENTIYSILSPEGFATILWKDGSRSEEAAELMKITSGELLNMGIVDKVIPERGYFTSEIIEAIKTAIVDELAELSQLSTEDLLEARYQRFRRY.

Residues 1–236 (MSDVARILKE…KTAIVDELAE (236 aa)) form the CoA carboxyltransferase C-terminal domain.

The protein belongs to the AccA family. As to quaternary structure, acetyl-CoA carboxylase is a heterohexamer composed of biotin carboxyl carrier protein (AccB), biotin carboxylase (AccC) and two subunits each of ACCase subunit alpha (AccA) and ACCase subunit beta (AccD).

The protein resides in the cytoplasm. It carries out the reaction N(6)-carboxybiotinyl-L-lysyl-[protein] + acetyl-CoA = N(6)-biotinyl-L-lysyl-[protein] + malonyl-CoA. It functions in the pathway lipid metabolism; malonyl-CoA biosynthesis; malonyl-CoA from acetyl-CoA: step 1/1. Functionally, component of the acetyl coenzyme A carboxylase (ACC) complex. First, biotin carboxylase catalyzes the carboxylation of biotin on its carrier protein (BCCP) and then the CO(2) group is transferred by the carboxyltransferase to acetyl-CoA to form malonyl-CoA. This chain is Acetyl-coenzyme A carboxylase carboxyl transferase subunit alpha, found in Streptococcus thermophilus (strain CNRZ 1066).